The following is a 403-amino-acid chain: G2/mitotic-specific cyclin-B3 (403 aa).

Disordered stretches follow at residues 1-86 (MPVA…APPA) and 102-122 (RKTP…PEEP). A compositionally biased stretch (polar residues) spans 7–25 (SKAQSSKQPRASKAPSVTE). A D-box motif is present at residues 51 to 59 (RSAFGDITN).

It belongs to the cyclin family. Cyclin AB subfamily. Interacts with the CDK1 and CDK2 protein kinases. In terms of processing, ubiquitinated, leading to its degradation.

It is found in the nucleus. Its function is as follows. Cyclins are positive regulatory subunits of the cyclin-dependent kinases (CDKs), and thereby play an essential role in the control of the cell cycle, notably via their destruction during cell division. Could be involved at the G2/M (mitosis or meiosis) transition. G2/M cyclins accumulate steadily during G2 and are abruptly destroyed at mitosis. This is G2/mitotic-specific cyclin-B3 (CCNB3) from Gallus gallus (Chicken).